The following is a 254-amino-acid chain: Type III pantothenate kinase (254 aa).

6-13 (DVGNTNIV) contributes to the ATP binding site. Residues phenylalanine 100 and 107–110 (GADR) contribute to the substrate site. The active-site Proton acceptor is the aspartate 109. Aspartate 129 is a binding site for K(+). Threonine 132 provides a ligand contact to ATP. Residue threonine 184 participates in substrate binding.

This sequence belongs to the type III pantothenate kinase family. Homodimer. NH4(+) serves as cofactor. K(+) is required as a cofactor.

It is found in the cytoplasm. The catalysed reaction is (R)-pantothenate + ATP = (R)-4'-phosphopantothenate + ADP + H(+). Its pathway is cofactor biosynthesis; coenzyme A biosynthesis; CoA from (R)-pantothenate: step 1/5. Catalyzes the phosphorylation of pantothenate (Pan), the first step in CoA biosynthesis. In Moorella thermoacetica (strain ATCC 39073 / JCM 9320), this protein is Type III pantothenate kinase.